Here is a 264-residue protein sequence, read N- to C-terminus: Virulence plasmid ParA family protein pGP5-D (264 aa).

9 to 16 serves as a coordination point for ATP; the sequence is FKGGTGKT.

It belongs to the ParA family.

Its function is as follows. Required for growth within mammalian cells. This is Virulence plasmid ParA family protein pGP5-D from Chlamydia trachomatis.